We begin with the raw amino-acid sequence, 133 residues long: Putative nickel-responsive regulator (133 aa).

Positions 74, 85, 87, and 93 each coordinate Ni(2+).

It belongs to the transcriptional regulatory CopG/NikR family. Requires Ni(2+) as cofactor.

In terms of biological role, transcriptional regulator. This chain is Putative nickel-responsive regulator, found in Saccharolobus islandicus (strain Y.N.15.51 / Yellowstone #2) (Sulfolobus islandicus).